Consider the following 147-residue polypeptide: Deoxyuridine 5'-triphosphate nucleotidohydrolase (147 aa).

Substrate contacts are provided by residues 63–65 (RSG), N76, and 80–82 (TID).

Belongs to the dUTPase family. It depends on Mg(2+) as a cofactor.

It catalyses the reaction dUTP + H2O = dUMP + diphosphate + H(+). The protein operates within pyrimidine metabolism; dUMP biosynthesis; dUMP from dCTP (dUTP route): step 2/2. Its function is as follows. This enzyme is involved in nucleotide metabolism: it produces dUMP, the immediate precursor of thymidine nucleotides and it decreases the intracellular concentration of dUTP so that uracil cannot be incorporated into DNA. The sequence is that of Deoxyuridine 5'-triphosphate nucleotidohydrolase from Chlamydia felis (strain Fe/C-56) (Chlamydophila felis).